Consider the following 357-residue polypeptide: Serine/threonine-protein kinase nekl-2 (357 aa).

Residues 4–267 (YEKVRVVGRG…VSQLLSDPLV (264 aa)) enclose the Protein kinase domain. ATP is bound by residues 10-18 (VGRGAFGVC) and Lys-35. The active-site Proton acceptor is Asp-137. Basic and acidic residues predominate over residues 281–290 (IEPPPTDKRK). Positions 281 to 357 (IEPPPTDKRK…QSRSQVHSKY (77 aa)) are disordered. 2 stretches are compositionally biased toward polar residues: residues 293 to 327 (ASLSSRLRTYPTQSTLRPYSLSSNAPTTHLTQLTP) and 336 to 357 (FFSSGRTSNQRTQSRSQVHSKY).

Belongs to the protein kinase superfamily. NEK Ser/Thr protein kinase family. NIMA subfamily. Mg(2+) is required as a cofactor. Expressed in hypodermal cells including in hyp7 syncytium but not in seam cells.

It is found in the cytoplasm. The enzyme catalyses L-seryl-[protein] + ATP = O-phospho-L-seryl-[protein] + ADP + H(+). It carries out the reaction L-threonyl-[protein] + ATP = O-phospho-L-threonyl-[protein] + ADP + H(+). Probable serine/threonine-protein kinase required for the completion of molting. May play a role in endocytosis in the hypodermis syncytium. This chain is Serine/threonine-protein kinase nekl-2, found in Caenorhabditis elegans.